Reading from the N-terminus, the 115-residue chain is Parathyroid hormone (115 aa).

A signal peptide spans 1-25 (MIPAKDMAKVMIVMLAICFLTKSDG). A propeptide spanning residues 26–31 (KSVKKR) is cleaved from the precursor. The interval 51 to 69 (RVEWLRKKLQDVHNFVALG) is important for receptor binding. The interval 73 to 115 (APRDAGSQRPRKKEDNVLVESHEKSLGEADKADVNVLTKAKSQ) is disordered. Basic and acidic residues predominate over residues 84–105 (KKEDNVLVESHEKSLGEADKAD).

The protein belongs to the parathyroid hormone family. In terms of assembly, interacts with PTH1R (via N-terminal extracellular domain).

The protein resides in the secreted. In terms of biological role, parathyroid hormone elevates calcium level by dissolving the salts in bone and preventing their renal excretion. Acts by binding to its receptor, PTH1R, activating G protein-coupled receptor signaling. Stimulates [1-14C]-2-deoxy-D-glucose (2DG) transport and glycogen synthesis in osteoblastic cells. This Homo sapiens (Human) protein is Parathyroid hormone.